We begin with the raw amino-acid sequence, 602 residues long: tRNA uridine 5-carboxymethylaminomethyl modification enzyme MnmG (602 aa).

10–15 (GGGHAG) lines the FAD pocket. Residues 217–242 (DPQPRGFTGRPGPRAAESPTWQTHTT) are disordered. 267-281 (GPRYCPSIEDKVVRF) is a binding site for NAD(+).

This sequence belongs to the MnmG family. In terms of assembly, homodimer. Heterotetramer of two MnmE and two MnmG subunits. Requires FAD as cofactor.

The protein localises to the cytoplasm. NAD-binding protein involved in the addition of a carboxymethylaminomethyl (cmnm) group at the wobble position (U34) of certain tRNAs, forming tRNA-cmnm(5)s(2)U34. The polypeptide is tRNA uridine 5-carboxymethylaminomethyl modification enzyme MnmG (Deinococcus geothermalis (strain DSM 11300 / CIP 105573 / AG-3a)).